The following is an 874-amino-acid chain: Valine--tRNA ligase (874 aa).

The short motif at 42–52 (PNITGRIHIGH) is the 'HIGH' region element. The 'KMSKS' region signature appears at 522–526 (KMSKS). Lys-525 provides a ligand contact to ATP. A coiled-coil region spans residues 806–874 (DYIDIDTEKQ…KLQALLKEIS (69 aa)).

It belongs to the class-I aminoacyl-tRNA synthetase family. ValS type 1 subfamily. Monomer.

The protein resides in the cytoplasm. The catalysed reaction is tRNA(Val) + L-valine + ATP = L-valyl-tRNA(Val) + AMP + diphosphate. In terms of biological role, catalyzes the attachment of valine to tRNA(Val). As ValRS can inadvertently accommodate and process structurally similar amino acids such as threonine, to avoid such errors, it has a 'posttransfer' editing activity that hydrolyzes mischarged Thr-tRNA(Val) in a tRNA-dependent manner. The chain is Valine--tRNA ligase from Petrotoga mobilis (strain DSM 10674 / SJ95).